We begin with the raw amino-acid sequence, 343 residues long: DNA-directed RNA polymerase subunit alpha (343 aa).

The interval 1–239 is alpha N-terminal domain (alpha-NTD); sequence MGETVTIQKN…DQLNVFVNFE (239 aa). The alpha C-terminal domain (alpha-CTD) stretch occupies residues 255–343; the sequence is FNPAFLKKVD…ELAKRFEDHY (89 aa).

This sequence belongs to the RNA polymerase alpha chain family. As to quaternary structure, homodimer. The RNAP catalytic core consists of 2 alpha, 1 beta, 1 beta' and 1 omega subunit. When a sigma factor is associated with the core the holoenzyme is formed, which can initiate transcription.

The catalysed reaction is RNA(n) + a ribonucleoside 5'-triphosphate = RNA(n+1) + diphosphate. Its function is as follows. DNA-dependent RNA polymerase catalyzes the transcription of DNA into RNA using the four ribonucleoside triphosphates as substrates. In Bradyrhizobium diazoefficiens (strain JCM 10833 / BCRC 13528 / IAM 13628 / NBRC 14792 / USDA 110), this protein is DNA-directed RNA polymerase subunit alpha.